We begin with the raw amino-acid sequence, 252 residues long: Probable endonuclease 4 (252 aa).

Zn(2+) contacts are provided by His-56, His-96, Glu-129, Asp-162, His-165, His-191, Asp-204, His-206, and Glu-233.

This sequence belongs to the AP endonuclease 2 family. The cofactor is Zn(2+).

It catalyses the reaction Endonucleolytic cleavage to 5'-phosphooligonucleotide end-products.. Its function is as follows. Endonuclease IV plays a role in DNA repair. It cleaves phosphodiester bonds at apurinic or apyrimidinic (AP) sites, generating a 3'-hydroxyl group and a 5'-terminal sugar phosphate. In Mycobacterium marinum (strain ATCC BAA-535 / M), this protein is Probable endonuclease 4.